Consider the following 418-residue polypeptide: 26S proteasome regulatory subunit 6B (418 aa).

Position 1 is an N-acetylmethionine (Met1). Residue Ser21 is modified to Phosphoserine. Thr25 is subject to Phosphothreonine. A Phosphoserine modification is found at Ser28. Gly206 to Thr213 contacts ATP. N6-acetyllysine is present on residues Lys397 and Lys401.

The protein belongs to the AAA ATPase family. In terms of assembly, component of the 19S proteasome regulatory particle complex. The 26S proteasome consists of a 20S core particle (CP) and two 19S regulatory subunits (RP). The regulatory particle is made of a lid composed of 9 subunits, a base containing 6 ATPases including PSMC4 and few additional components. Interacts with NR1I3. Interacts with PAAF1. Interacts with TRIM5. Interacts with ZFAND1.

The protein localises to the cytoplasm. The protein resides in the nucleus. In terms of biological role, component of the 26S proteasome, a multiprotein complex involved in the ATP-dependent degradation of ubiquitinated proteins. This complex plays a key role in the maintenance of protein homeostasis by removing misfolded or damaged proteins, which could impair cellular functions, and by removing proteins whose functions are no longer required. Therefore, the proteasome participates in numerous cellular processes, including cell cycle progression, apoptosis, or DNA damage repair. PSMC4 belongs to the heterohexameric ring of AAA (ATPases associated with diverse cellular activities) proteins that unfolds ubiquitinated target proteins that are concurrently translocated into a proteolytic chamber and degraded into peptides. The protein is 26S proteasome regulatory subunit 6B (Psmc4) of Mus musculus (Mouse).